The chain runs to 128 residues: Large ribosomal subunit protein eL8 (128 aa).

Belongs to the eukaryotic ribosomal protein eL8 family. Part of the 50S ribosomal subunit. Probably part of the RNase P complex.

The protein localises to the cytoplasm. Its function is as follows. Multifunctional RNA-binding protein that recognizes the K-turn motif in ribosomal RNA, the RNA component of RNase P, box H/ACA, box C/D and box C'/D' sRNAs. The polypeptide is Large ribosomal subunit protein eL8 (Ignicoccus hospitalis (strain KIN4/I / DSM 18386 / JCM 14125)).